A 325-amino-acid chain; its full sequence is Heat-inducible transcription repressor HrcA (325 aa).

It belongs to the HrcA family.

Functionally, negative regulator of class I heat shock genes (grpE-dnaK-dnaJ and groELS operons). Prevents heat-shock induction of these operons. The chain is Heat-inducible transcription repressor HrcA from Staphylococcus epidermidis (strain ATCC 35984 / DSM 28319 / BCRC 17069 / CCUG 31568 / BM 3577 / RP62A).